Here is a 306-residue protein sequence, read N- to C-terminus: Glutaminase (306 aa).

Substrate is bound by residues Ser-64, Asn-115, Glu-159, Asn-166, Tyr-190, Tyr-242, and Val-260.

It belongs to the glutaminase family. In terms of assembly, homotetramer.

The enzyme catalyses L-glutamine + H2O = L-glutamate + NH4(+). This Aliivibrio fischeri (strain ATCC 700601 / ES114) (Vibrio fischeri) protein is Glutaminase.